A 183-amino-acid chain; its full sequence is Ribosome-recycling factor (183 aa).

This sequence belongs to the RRF family.

The protein localises to the cytoplasm. Responsible for the release of ribosomes from messenger RNA at the termination of protein biosynthesis. May increase the efficiency of translation by recycling ribosomes from one round of translation to another. This is Ribosome-recycling factor from Ureaplasma parvum serovar 3 (strain ATCC 27815 / 27 / NCTC 11736).